The primary structure comprises 740 residues: Ion-translocating oxidoreductase complex subunit C (740 aa).

4Fe-4S ferredoxin-type domains are found at residues 369–397 and 407–436; these read GEPQ…QQLY and KATT…VQYF. Positions 377, 380, 383, 387, 416, 419, 422, and 426 each coordinate [4Fe-4S] cluster. Residues 602–718 form a disordered region; that stretch reads KLEQQQANAE…EEQVDPRKAA (117 aa).

This sequence belongs to the 4Fe4S bacterial-type ferredoxin family. RnfC subfamily. The complex is composed of six subunits: RsxA, RsxB, RsxC, RsxD, RsxE and RsxG. [4Fe-4S] cluster is required as a cofactor.

The protein localises to the cell inner membrane. Functionally, part of a membrane-bound complex that couples electron transfer with translocation of ions across the membrane. Required to maintain the reduced state of SoxR. The chain is Ion-translocating oxidoreductase complex subunit C from Shigella sonnei (strain Ss046).